A 344-amino-acid chain; its full sequence is Nicotinate-nucleotide--dimethylbenzimidazole phosphoribosyltransferase (344 aa).

Glu311 serves as the catalytic Proton acceptor.

Belongs to the CobT family.

The catalysed reaction is 5,6-dimethylbenzimidazole + nicotinate beta-D-ribonucleotide = alpha-ribazole 5'-phosphate + nicotinate + H(+). It participates in nucleoside biosynthesis; alpha-ribazole biosynthesis; alpha-ribazole from 5,6-dimethylbenzimidazole: step 1/2. Its function is as follows. Catalyzes the synthesis of alpha-ribazole-5'-phosphate from nicotinate mononucleotide (NAMN) and 5,6-dimethylbenzimidazole (DMB). This chain is Nicotinate-nucleotide--dimethylbenzimidazole phosphoribosyltransferase, found in Aromatoleum aromaticum (strain DSM 19018 / LMG 30748 / EbN1) (Azoarcus sp. (strain EbN1)).